The following is a 464-amino-acid chain: uncharacterized protein (464 aa).

The region spanning 13–71 (MLKVSDIIQIKIDKIVFGGEGLGYYNGFAVFVPMSIPEDELEIEIISIKKTYARGLIKN) is the TRAM domain. S-adenosyl-L-methionine-binding residues include glutamine 295, tyrosine 324, glutamate 345, and aspartate 393. The active-site Nucleophile is the cysteine 420.

It belongs to the class I-like SAM-binding methyltransferase superfamily. RNA M5U methyltransferase family.

This is an uncharacterized protein from Fusobacterium nucleatum subsp. nucleatum (strain ATCC 25586 / DSM 15643 / BCRC 10681 / CIP 101130 / JCM 8532 / KCTC 2640 / LMG 13131 / VPI 4355).